A 478-amino-acid chain; its full sequence is SPbeta prophage-derived uncharacterized protein YonD (478 aa).

Positions 326–419 form a coiled coil; it reads IQSQLNQKDE…KFSTEEVQNL (94 aa).

The protein is SPbeta prophage-derived uncharacterized protein YonD (yonD) of Bacillus subtilis (strain 168).